The following is a 667-amino-acid chain: DNA ligase (667 aa).

NAD(+) is bound by residues 32–36, 81–82, and E111; these read DSVYD and SL. K113 (N6-AMP-lysine intermediate) is an active-site residue. 4 residues coordinate NAD(+): R134, E168, K285, and K309. Positions 403, 406, 421, and 426 each coordinate Zn(2+). The region spanning 588–667 is the BRCT domain; the sequence is VGDNPFAGKT…DNLIEQLNLI (80 aa).

Belongs to the NAD-dependent DNA ligase family. LigA subfamily. Mg(2+) serves as cofactor. Requires Mn(2+) as cofactor.

The enzyme catalyses NAD(+) + (deoxyribonucleotide)n-3'-hydroxyl + 5'-phospho-(deoxyribonucleotide)m = (deoxyribonucleotide)n+m + AMP + beta-nicotinamide D-nucleotide.. In terms of biological role, DNA ligase that catalyzes the formation of phosphodiester linkages between 5'-phosphoryl and 3'-hydroxyl groups in double-stranded DNA using NAD as a coenzyme and as the energy source for the reaction. It is essential for DNA replication and repair of damaged DNA. The sequence is that of DNA ligase from Lysinibacillus sphaericus (strain C3-41).